Here is a 340-residue protein sequence, read N- to C-terminus: Lipopolysaccharide heptosyltransferase 3 (340 aa).

Belongs to the glycosyltransferase 9 family.

The catalysed reaction is an L-alpha-D-Hep-(1-&gt;3)-4-O-phospho-L-alpha-D-Hep-(1-&gt;5)-[alpha-Kdo-(2-&gt;4)]-alpha-Kdo-(2-&gt;6)-lipid A + ADP-L-glycero-beta-D-manno-heptose = an L-alpha-D-Hep-(1-&gt;7)-L-alpha-D-Hep-(1-&gt;3)-4-O-phospho-L-alpha-D-Hep-(1-&gt;5)-[alpha-Kdo-(2-&gt;4)]-alpha-Kdo-(2-&gt;6)-lipid A + ADP + H(+). It catalyses the reaction L-alpha-D-Hep-(1-&gt;3)-4-O-phospho-L-alpha-D-Hep-(1-&gt;5)-[alpha-Kdo-(2-&gt;4)]-alpha-Kdo-(2-&gt;6)-lipid A (E. coli) + ADP-L-glycero-beta-D-manno-heptose = L-alpha-D-Hep-(1-&gt;7)-L-alpha-D-Hep-(1-&gt;3)-4-O-phospho-L-alpha-D-Hep-(1-&gt;5)-[alpha-Kdo-(2-&gt;4)]-alpha-Kdo-(2-&gt;6)-lipid A (E. coli) + ADP + H(+). It functions in the pathway bacterial outer membrane biogenesis; LPS core biosynthesis. Functionally, glycosyltransferase involved in the biosynthesis of the core oligosaccharide region of lipopolysaccharide (LPS). Catalyzes the addition of the third heptose unit (HepIII) to the second heptose unit (HepII) of the phospho-Hep2-Kdo2-lipid A module. The transfer of HepIII seems to be a prerequisite to the phosphorylation of the second heptose unit. This chain is Lipopolysaccharide heptosyltransferase 3, found in Escherichia coli.